Here is a 273-residue protein sequence, read N- to C-terminus: Multidrug-efflux transporter 2 regulator (273 aa).

The region spanning 8 to 77 is the HTH merR-type domain; that stretch reads YFTTGEFSKL…LKEIKCLIKG (70 aa). Residues 11–30 constitute a DNA-binding region (H-T-H motif); the sequence is TGEFSKLCRVKKQTLFHYDE.

Activates transcription of the blt gene in response to structurally dissimilar drugs. The chain is Multidrug-efflux transporter 2 regulator (bltR) from Bacillus subtilis (strain 168).